Reading from the N-terminus, the 274-residue chain is 3-methyl-2-oxobutanoate hydroxymethyltransferase (274 aa).

Mg(2+) contacts are provided by aspartate 49 and aspartate 88. 3-methyl-2-oxobutanoate contacts are provided by residues aspartate 49–serine 50, aspartate 88, and lysine 118. Glutamate 120 is a binding site for Mg(2+). Glutamate 187 (proton acceptor) is an active-site residue.

The protein belongs to the PanB family. In terms of assembly, homodecamer; pentamer of dimers. It depends on Mg(2+) as a cofactor.

The protein localises to the cytoplasm. It catalyses the reaction 3-methyl-2-oxobutanoate + (6R)-5,10-methylene-5,6,7,8-tetrahydrofolate + H2O = 2-dehydropantoate + (6S)-5,6,7,8-tetrahydrofolate. It participates in cofactor biosynthesis; (R)-pantothenate biosynthesis; (R)-pantoate from 3-methyl-2-oxobutanoate: step 1/2. Functionally, catalyzes the reversible reaction in which hydroxymethyl group from 5,10-methylenetetrahydrofolate is transferred onto alpha-ketoisovalerate to form ketopantoate. The sequence is that of 3-methyl-2-oxobutanoate hydroxymethyltransferase from Allorhizobium ampelinum (strain ATCC BAA-846 / DSM 112012 / S4) (Agrobacterium vitis (strain S4)).